Here is a 256-residue protein sequence, read N- to C-terminus: UPF0246 protein Sde_3824 (256 aa).

Belongs to the UPF0246 family.

The chain is UPF0246 protein Sde_3824 from Saccharophagus degradans (strain 2-40 / ATCC 43961 / DSM 17024).